Reading from the N-terminus, the 370-residue chain is DNA replication and repair protein RecF (370 aa).

30–37 (GENAQGKT) contacts ATP.

It belongs to the RecF family.

It is found in the cytoplasm. The RecF protein is involved in DNA metabolism; it is required for DNA replication and normal SOS inducibility. RecF binds preferentially to single-stranded, linear DNA. It also seems to bind ATP. This Bacillus pumilus (strain SAFR-032) protein is DNA replication and repair protein RecF.